The sequence spans 471 residues: Putative multidrug resistance protein MdtD (471 aa).

At 1-11 the chain is on the periplasmic side; sequence MTDLPDSTRWQ. The chain crosses the membrane as a helical span at residues 12–32; that stretch reads LWIVAFGFFMQSLDTTIVNTA. At 33-48 the chain is on the cytoplasmic side; it reads LPSMAQSLGESPLHMH. The helical transmembrane segment at 49-69 threads the bilayer; sequence MVIVSYVLTVAVMLPASGWLA. Over 70–76 the chain is Periplasmic; it reads DKVGVRN. Residues 77-97 traverse the membrane as a helical segment; it reads IFFTAIVLFTLGSLFCALSGT. The Cytoplasmic portion of the chain corresponds to 98 to 101; sequence LNEL. The helical transmembrane segment at 102–124 threads the bilayer; it reads LLARALQGVGGAMMVPVGRLTVM. Topologically, residues 125-137 are periplasmic; the sequence is KIVPREQYMAAMT. A helical membrane pass occupies residues 138–158; that stretch reads FVTLPGQIGPLLGPALGGLLV. The Cytoplasmic portion of the chain corresponds to 159–164; the sequence is EYASWH. The chain crosses the membrane as a helical span at residues 165–185; it reads WIFLINIPVGIIGAITTLMLM. Residues 186-196 lie on the Periplasmic side of the membrane; that stretch reads PNYTMQTRRFD. Residues 197–217 form a helical membrane-spanning segment; the sequence is LSGFLLLAVGMAVLTLALDGS. Residues 218–224 are Cytoplasmic-facing; it reads KGTGFSP. Residues 225–245 traverse the membrane as a helical segment; the sequence is LAIAGLVAVGVVALVLYLLHA. Over 246–262 the chain is Periplasmic; sequence QNNNRALFSLKLFRTRT. A helical transmembrane segment spans residues 263-283; sequence FSLGLAGSFAGRIGSGMLPFM. The Cytoplasmic portion of the chain corresponds to 284–285; it reads TP. A helical transmembrane segment spans residues 286–306; it reads VFLQIGFGFSPFHAGLMMIPM. At 307–341 the chain is on the periplasmic side; that stretch reads VLGSMGMKRIVVQVVNRFGYRRVLVATTLGLSLVT. Residues 342-362 form a helical membrane-spanning segment; it reads LLFMTTALLGWYYVLPFVLFL. The Cytoplasmic portion of the chain corresponds to 363 to 395; sequence QGMVNSTRFSSMNTLTLKDLPDNLASSGNSLLS. Residues 396–416 form a helical membrane-spanning segment; sequence MIMQLSMSIGVTIAGLLLGLF. At 417–430 the chain is on the periplasmic side; that stretch reads GSQHVSVDSGTTQT. A helical membrane pass occupies residues 431–451; that stretch reads VFMYTWLSMASIIALPAFIFA. Residues 452–471 are Cytoplasmic-facing; sequence RVPNDTHQNVAISRRKRSAQ.

This sequence belongs to the major facilitator superfamily. TCR/Tet family.

It localises to the cell inner membrane. The sequence is that of Putative multidrug resistance protein MdtD from Escherichia coli O6:H1 (strain CFT073 / ATCC 700928 / UPEC).